The primary structure comprises 437 residues: ATP-dependent protease ATPase subunit HslU (437 aa).

Residues Val18, 60-65, Asp249, Glu315, and Arg387 contribute to the ATP site; that span reads GVGKTE.

It belongs to the ClpX chaperone family. HslU subfamily. In terms of assembly, a double ring-shaped homohexamer of HslV is capped on each side by a ring-shaped HslU homohexamer. The assembly of the HslU/HslV complex is dependent on binding of ATP.

The protein resides in the cytoplasm. Functionally, ATPase subunit of a proteasome-like degradation complex; this subunit has chaperone activity. The binding of ATP and its subsequent hydrolysis by HslU are essential for unfolding of protein substrates subsequently hydrolyzed by HslV. HslU recognizes the N-terminal part of its protein substrates and unfolds these before they are guided to HslV for hydrolysis. The chain is ATP-dependent protease ATPase subunit HslU from Rhodospirillum centenum (strain ATCC 51521 / SW).